The primary structure comprises 412 residues: MNAEIIAVGTELLLGQIANTNAQFLSEKLASIGINVYYHTVVGDNNKRLQKAIEAAEERADILIFTGGLGPTKDDLTKETIAASLDEELVYDEKALALISNYFKRTGREFTENNKKQALVLNGATVFANDHGMAPGMGVNKNRKSYILLPGPPKEMKPMYVSYVEPFLRNFTTGENIYSRVLRFFGIGESQLEVKVQDLIDGQTNPTIAPLANDGEVTLRLTAKHQNVSEAEKLIQHVEDLILERVGEFFYGYDQEFLHYKAIELLKRKGLTLACAESLTGGLFGNQVTENAGVSSVFKGGVICYHNDVKQYVLRVPEEVLHTDGAVSKECARYLAENVKDVLKADIGISFTGVAGPDASEQKEPGTVFVGLSIKDEPTVVFPLNLSGSRQQIRERTAKYGFYHLYKKLEEI.

Belongs to the CinA family.

The chain is Putative competence-damage inducible protein from Bacillus cereus (strain ATCC 14579 / DSM 31 / CCUG 7414 / JCM 2152 / NBRC 15305 / NCIMB 9373 / NCTC 2599 / NRRL B-3711).